Consider the following 517-residue polypeptide: RNA-binding region-containing protein 3 (517 aa).

The interval 1 to 26 (MAAPEQPLAISRGCTSSSSLSPPRGD) is disordered. Residues 1-257 (MAAPEQPLAI…STDDEDRQRM (257 aa)) form a necessary for interaction with PDCD7 region. At Ser21 the chain carries Phosphoserine. One can recognise an RRM 1 domain in the interval 27–102 (RTLLVRHLPA…HTLVVEFAKE (76 aa)). 2 disordered regions span residues 106–130 (VHSP…DDKE) and 213–254 (MPLH…DEDR). Ser108 carries the post-translational modification Phosphoserine. Positions 115–130 (SEKKKRSDDPVEDDKE) are enriched in basic and acidic residues. The necessary for binding to m(7)G-capped U12 snRNA stretch occupies residues 211-380 (DYMPLHAPLP…LDITEEIKED (170 aa)). Residues 217–230 (APLPPTSPQPPEEP) show a composition bias toward pro residues. Positions 231–252 (PLPDEDEELSSEESEYESTDDE) are enriched in acidic residues. Residues 420 to 503 (CRIYVKNLAK…KPMVVQFARS (84 aa)) enclose the RRM 2 domain.

As to quaternary structure, component of the U11/U12 snRNPs that are part of the U12-type spliceosome. Found in a complex with m(7)G-capped U12 snRNA. Interacts with PDCD7. As to expression, highly expressed in pancreas and kidney. Detected at lower levels in heart, brain, placenta, lung, liver, spleen, thymus, prostate, testis, ovary, small intestine, colon and leukocytes.

It localises to the nucleus. Its function is as follows. Participates in pre-mRNA U12-dependent splicing, performed by the minor spliceosome which removes U12-type introns. U12-type introns comprises less than 1% of all non-coding sequences. Binds to the 3'-stem-loop of m(7)G-capped U12 snRNA. The chain is RNA-binding region-containing protein 3 (RNPC3) from Homo sapiens (Human).